A 431-amino-acid chain; its full sequence is D-inositol 3-phosphate glycosyltransferase (431 aa).

Residue His-21 participates in 1D-myo-inositol 3-phosphate binding. Residues 27–28 (QP) and Gly-35 contribute to the UDP-N-acetyl-alpha-D-glucosamine site. 1D-myo-inositol 3-phosphate contacts are provided by residues 32–37 (DAGGMN), Arg-90, Tyr-123, Thr-147, and Arg-167. UDP-N-acetyl-alpha-D-glucosamine contacts are provided by Arg-241, Lys-246, and Gln-307. Residues Tyr-316, Arg-317, and Ala-319 each contribute to the Mg(2+) site. Residues Glu-329 and Glu-337 each coordinate UDP-N-acetyl-alpha-D-glucosamine. Thr-343 is a Mg(2+) binding site.

This sequence belongs to the glycosyltransferase group 1 family. MshA subfamily. As to quaternary structure, homodimer.

The catalysed reaction is 1D-myo-inositol 3-phosphate + UDP-N-acetyl-alpha-D-glucosamine = 1D-myo-inositol 2-acetamido-2-deoxy-alpha-D-glucopyranoside 3-phosphate + UDP + H(+). In terms of biological role, catalyzes the transfer of a N-acetyl-glucosamine moiety to 1D-myo-inositol 3-phosphate to produce 1D-myo-inositol 2-acetamido-2-deoxy-glucopyranoside 3-phosphate in the mycothiol biosynthesis pathway. This is D-inositol 3-phosphate glycosyltransferase from Saccharomonospora viridis (strain ATCC 15386 / DSM 43017 / JCM 3036 / CCUG 5913 / NBRC 12207 / NCIMB 9602 / P101) (Thermoactinomyces viridis).